Consider the following 180-residue polypeptide: Large ribosomal subunit protein uL6 (180 aa).

This sequence belongs to the universal ribosomal protein uL6 family. In terms of assembly, part of the 50S ribosomal subunit.

This protein binds to the 23S rRNA, and is important in its secondary structure. It is located near the subunit interface in the base of the L7/L12 stalk, and near the tRNA binding site of the peptidyltransferase center. The protein is Large ribosomal subunit protein uL6 of Picosynechococcus sp. (strain ATCC 27264 / PCC 7002 / PR-6) (Agmenellum quadruplicatum).